Reading from the N-terminus, the 356-residue chain is Histidinol-phosphate aminotransferase (356 aa).

The residue at position 214 (lysine 214) is an N6-(pyridoxal phosphate)lysine.

Belongs to the class-II pyridoxal-phosphate-dependent aminotransferase family. Histidinol-phosphate aminotransferase subfamily. As to quaternary structure, homodimer. The cofactor is pyridoxal 5'-phosphate.

It carries out the reaction L-histidinol phosphate + 2-oxoglutarate = 3-(imidazol-4-yl)-2-oxopropyl phosphate + L-glutamate. The protein operates within amino-acid biosynthesis; L-histidine biosynthesis; L-histidine from 5-phospho-alpha-D-ribose 1-diphosphate: step 7/9. The polypeptide is Histidinol-phosphate aminotransferase (Escherichia coli (strain SMS-3-5 / SECEC)).